A 127-amino-acid polypeptide reads, in one-letter code: Fluoride-specific ion channel FluC 2 (127 aa).

4 helical membrane-spanning segments follow: residues 4–24, 31–51, 62–82, and 94–114; these read IIAITGFAMLGGGLREGLSLL, FWITCLINIVGAFVLSLITNL, IVIGMSVGFVGSFTTFSTFTF, and VLALSYVAASLGLGLLAGLAG. The Na(+) site is built by G72 and T75.

The protein belongs to the fluoride channel Fluc/FEX (TC 1.A.43) family.

It is found in the cell membrane. It carries out the reaction fluoride(in) = fluoride(out). Its activity is regulated as follows. Na(+) is not transported, but it plays an essential structural role and its presence is essential for fluoride channel function. Its function is as follows. Fluoride-specific ion channel. Important for reducing fluoride concentration in the cell, thus reducing its toxicity. This chain is Fluoride-specific ion channel FluC 2, found in Lactiplantibacillus plantarum (strain ATCC BAA-793 / NCIMB 8826 / WCFS1) (Lactobacillus plantarum).